A 177-amino-acid chain; its full sequence is T-cell receptor beta chain C region (177 aa).

A c region region spans residues 1–150 (EDLANVSAPQ…GVLSATVLYE (150 aa)). N-linked (GlcNAc...) asparagine glycans are attached at residues asparagine 5 and asparagine 22. A disulfide bond links cysteine 31 and cysteine 96. The chain crosses the membrane as a helical span at residues 146 to 168 (TVLYEILLGKATLYAVLVSALVL). Over 169-177 (MAMVKRKDS) the chain is Cytoplasmic.

The protein localises to the membrane. In Oryctolagus cuniculus (Rabbit), this protein is T-cell receptor beta chain C region.